A 791-amino-acid chain; its full sequence is Sphingomyelin phosphodiesterase 4 (791 aa).

A helical membrane pass occupies residues 755–775 (LFALLSFGLFSSTGLILIISF).

The cofactor is Mg(2+).

It is found in the endoplasmic reticulum membrane. The protein resides in the golgi apparatus membrane. Its subcellular location is the nucleus envelope. The protein localises to the cell membrane. It localises to the sarcolemma. The catalysed reaction is a sphingomyelin + H2O = phosphocholine + an N-acylsphing-4-enine + H(+). Catalyzes the hydrolysis of membrane sphingomyelin to form phosphorylcholine and ceramide. It has a relevant role in the homeostasis of membrane sphingolipids, thereby influencing membrane integrity, and endoplasmic reticulum organization and function. May sensitize cells to DNA damage-induced apoptosis. This Danio rerio (Zebrafish) protein is Sphingomyelin phosphodiesterase 4 (smpd4).